Here is an 849-residue protein sequence, read N- to C-terminus: Coiled-coil domain-containing protein 87 (849 aa).

Residues 387–415 (RHPAAGHRLEELEKMLRNLQEEEASGQWD) adopt a coiled-coil conformation.

The protein belongs to the CCDC87 family.

In terms of biological role, plays a role in spermatogenesis, where it is important for normal sperm head morphology. Also required for the acrosome reaction and thus normal male fertility. The chain is Coiled-coil domain-containing protein 87 (CCDC87) from Homo sapiens (Human).